The primary structure comprises 622 residues: Low affinity potassium transport system protein Kup (622 aa).

A run of 12 helical transmembrane segments spans residues 9–29, 49–69, 103–123, 137–157, 165–185, 213–233, 247–267, 276–296, 337–357, 363–383, 396–416, and 419–439; these read LPAI…TSPL, VFGF…IKYL, VIMG…TPAI, PQLD…LFMI, VGKL…GLGL, VSFI…ALYA, WFTV…ALLL, PFFL…AALA, IYIP…IVSF, LAAA…ILST, FVAL…TANL, and LLSG…VMTT.

Belongs to the HAK/KUP transporter (TC 2.A.72) family.

The protein localises to the cell inner membrane. It carries out the reaction K(+)(in) + H(+)(in) = K(+)(out) + H(+)(out). Functionally, responsible for the low-affinity transport of potassium into the cell. Likely operates as a K(+):H(+) symporter. The sequence is that of Low affinity potassium transport system protein Kup from Escherichia coli O157:H7.